The following is a 160-amino-acid chain: Type IV major fimbrial protein FimA (160 aa).

The propeptide at 1-7 is leader sequence; the sequence is MKSLQKG. At phenylalanine 8 the chain carries N-methylphenylalanine. A helical transmembrane segment spans residues 8-28; that stretch reads FTLIELMIVVAIIGILAAFAI. Residues cysteine 63 and cysteine 106 are joined by a disulfide bond.

Belongs to the N-Me-Phe pilin family. The pili are polar flexible filaments of about 5.4 nanometers diameter and 2.5 micrometers average length; they consist of only a single polypeptide chain arranged in a helical configuration of five subunits per turn in the assembled pilus.

Its subcellular location is the fimbrium. The protein resides in the membrane. Functionally, major component of the type IV fimbriae that plays an essential role in twitching motility, natural transformation, and protease secretion. This chain is Type IV major fimbrial protein FimA (fimA), found in Dichelobacter nodosus (Bacteroides nodosus).